Reading from the N-terminus, the 625-residue chain is 1-deoxy-D-xylulose-5-phosphate synthase (625 aa).

Residues H80 and 121 to 123 (GHS) contribute to the thiamine diphosphate site. D152 contributes to the Mg(2+) binding site. Thiamine diphosphate contacts are provided by residues 153–154 (GS), N181, Y290, and E371. N181 is a binding site for Mg(2+).

The protein belongs to the transketolase family. DXPS subfamily. As to quaternary structure, homodimer. Mg(2+) is required as a cofactor. Thiamine diphosphate serves as cofactor.

The enzyme catalyses D-glyceraldehyde 3-phosphate + pyruvate + H(+) = 1-deoxy-D-xylulose 5-phosphate + CO2. It functions in the pathway metabolic intermediate biosynthesis; 1-deoxy-D-xylulose 5-phosphate biosynthesis; 1-deoxy-D-xylulose 5-phosphate from D-glyceraldehyde 3-phosphate and pyruvate: step 1/1. Catalyzes the acyloin condensation reaction between C atoms 2 and 3 of pyruvate and glyceraldehyde 3-phosphate to yield 1-deoxy-D-xylulose-5-phosphate (DXP). This Haemophilus influenzae (strain PittGG) protein is 1-deoxy-D-xylulose-5-phosphate synthase.